The sequence spans 649 residues: 1-deoxy-D-xylulose-5-phosphate synthase 1 (649 aa).

Thiamine diphosphate contacts are provided by residues His-73 and 113-115; that span reads SHA. Asp-144 is a binding site for Mg(2+). Residues 145 to 146, Asn-174, Tyr-285, and Glu-367 contribute to the thiamine diphosphate site; that span reads GA. Asn-174 provides a ligand contact to Mg(2+). The tract at residues 623–649 is disordered; sequence LLPGTGTRPGAQEYRPRMPLTDWSEPA.

The protein belongs to the transketolase family. DXPS subfamily. Homodimer. It depends on Mg(2+) as a cofactor. Thiamine diphosphate serves as cofactor.

The enzyme catalyses D-glyceraldehyde 3-phosphate + pyruvate + H(+) = 1-deoxy-D-xylulose 5-phosphate + CO2. The protein operates within metabolic intermediate biosynthesis; 1-deoxy-D-xylulose 5-phosphate biosynthesis; 1-deoxy-D-xylulose 5-phosphate from D-glyceraldehyde 3-phosphate and pyruvate: step 1/1. Functionally, catalyzes the acyloin condensation reaction between C atoms 2 and 3 of pyruvate and glyceraldehyde 3-phosphate to yield 1-deoxy-D-xylulose-5-phosphate (DXP). In Kitasatospora griseola (Streptomyces griseolosporeus), this protein is 1-deoxy-D-xylulose-5-phosphate synthase 1.